Reading from the N-terminus, the 174-residue chain is Superoxide dismutase [Cu-Zn] (174 aa).

Positions 1–20 (MMKSLFIASTMVLMAFPAFA) are cleaved as a signal peptide. Residues histidine 68, histidine 70, and histidine 93 each coordinate Cu cation. Residues cysteine 75 and cysteine 170 are joined by a disulfide bond. Residues histidine 93, histidine 102, histidine 110, and aspartate 113 each contribute to the Zn(2+) site. Residue histidine 148 coordinates Cu cation.

It belongs to the Cu-Zn superoxide dismutase family. Homodimer. It depends on Cu cation as a cofactor. Zn(2+) is required as a cofactor.

The protein resides in the periplasm. It catalyses the reaction 2 superoxide + 2 H(+) = H2O2 + O2. Its function is as follows. Destroys radicals which are normally produced within the cells and which are toxic to biological systems. The polypeptide is Superoxide dismutase [Cu-Zn] (sodC) (Brucella melitensis biotype 1 (strain ATCC 23456 / CCUG 17765 / NCTC 10094 / 16M)).